Consider the following 711-residue polypeptide: Polyribonucleotide nucleotidyltransferase (711 aa).

2 residues coordinate Mg(2+): Asp486 and Asp492. Residues Pro553–Ile612 form the KH domain. In terms of domain architecture, S1 motif spans Gly622–Lys690. The tract at residues Ile689–Glu711 is disordered. Low complexity predominate over residues Glu694–Glu711.

Belongs to the polyribonucleotide nucleotidyltransferase family. In terms of assembly, component of the RNA degradosome, which is a multiprotein complex involved in RNA processing and mRNA degradation. Requires Mg(2+) as cofactor.

The protein resides in the cytoplasm. It carries out the reaction RNA(n+1) + phosphate = RNA(n) + a ribonucleoside 5'-diphosphate. Functionally, involved in mRNA degradation. Catalyzes the phosphorolysis of single-stranded polyribonucleotides processively in the 3'- to 5'-direction. This chain is Polyribonucleotide nucleotidyltransferase, found in Klebsiella pneumoniae subsp. pneumoniae (strain ATCC 700721 / MGH 78578).